The chain runs to 299 residues: Taste receptor type 2 member 1 (299 aa).

The Extracellular segment spans residues 1 to 9 (MLESHLIIH). A helical membrane pass occupies residues 10-30 (FLLAVIQFLLGTFTNGIIVVV). Topologically, residues 31-55 (NGIDLIKHRKMAPLDLLLSCLAVSR) are cytoplasmic. A helical membrane pass occupies residues 56–76 (IFLQLFIFYVNVIVIFFIEFI). The Extracellular portion of the chain corresponds to 77–81 (MCSEN). The helical transmembrane segment at 82–102 (CAILLFINELELWLATWLGVF) threads the bilayer. Residues 103–124 (YCAKVASVPHPLFIWLKMKISK) are Cytoplasmic-facing. A helical transmembrane segment spans residues 125–145 (LVPWMILGSLLYVSMTCVFHS). The Extracellular segment spans residues 146–178 (KYAGFMVPYFLRNFFSQNATIQKEDTPAIQIFS). Residue Asn163 is glycosylated (N-linked (GlcNAc...) asparagine). A helical membrane pass occupies residues 179 to 199 (FVAEFLVPLLIFLVAVLLLIF). Topologically, residues 200 to 222 (SLGRHTRQMRNTVAGSRVPGRGA) are cytoplasmic. A helical membrane pass occupies residues 223–243 (PISALLSILSFVILYFSHCMI). Over 244–257 (KVFLSSLKFHVRSF) the chain is Extracellular. The chain crosses the membrane as a helical span at residues 258–278 (ILPFFILVIGIYPSGHSLILI). Residues 279 to 299 (LGNXKLKQNAKKFLLHSKCCQ) lie on the Cytoplasmic side of the membrane.

It belongs to the G-protein coupled receptor T2R family.

The protein localises to the membrane. Receptor that may play a role in the perception of bitterness and is gustducin-linked. May play a role in sensing the chemical composition of the gastrointestinal content. The activity of this receptor may stimulate alpha gustducin, mediate PLC-beta-2 activation and lead to the gating of TRPM5. This Pongo pygmaeus (Bornean orangutan) protein is Taste receptor type 2 member 1 (TAS2R1).